Consider the following 148-residue polypeptide: Cytochrome c-type biogenesis protein CcmE (148 aa).

Topologically, residues 1–7 (MKPRSKR) are cytoplasmic. A helical; Signal-anchor for type II membrane protein transmembrane segment spans residues 8 to 28 (LLLVAGAVALLVGAVALVLNA). Residues 29–148 (FQQNLVFFHT…AQKAAQTVQQ (120 aa)) lie on the Periplasmic side of the membrane. His123 and Tyr127 together coordinate heme.

This sequence belongs to the CcmE/CycJ family.

The protein resides in the cell inner membrane. In terms of biological role, heme chaperone required for the biogenesis of c-type cytochromes. Transiently binds heme delivered by CcmC and transfers the heme to apo-cytochromes in a process facilitated by CcmF and CcmH. This chain is Cytochrome c-type biogenesis protein CcmE, found in Aromatoleum aromaticum (strain DSM 19018 / LMG 30748 / EbN1) (Azoarcus sp. (strain EbN1)).